Here is a 329-residue protein sequence, read N- to C-terminus: GTP 3',8-cyclase (329 aa).

Residues A8–A234 enclose the Radical SAM core domain. R17 lines the GTP pocket. [4Fe-4S] cluster is bound by residues C24 and C28. Residue Y30 coordinates S-adenosyl-L-methionine. C31 lines the [4Fe-4S] cluster pocket. GTP is bound at residue R68. Residue G72 coordinates S-adenosyl-L-methionine. T99 contributes to the GTP binding site. S123 lines the S-adenosyl-L-methionine pocket. Position 160 (K160) interacts with GTP. M194 contacts S-adenosyl-L-methionine. 2 residues coordinate [4Fe-4S] cluster: C257 and C260. R262–R264 is a binding site for GTP. C274 lines the [4Fe-4S] cluster pocket.

Belongs to the radical SAM superfamily. MoaA family. As to quaternary structure, monomer and homodimer. It depends on [4Fe-4S] cluster as a cofactor.

It catalyses the reaction GTP + AH2 + S-adenosyl-L-methionine = (8S)-3',8-cyclo-7,8-dihydroguanosine 5'-triphosphate + 5'-deoxyadenosine + L-methionine + A + H(+). The protein operates within cofactor biosynthesis; molybdopterin biosynthesis. Its function is as follows. Catalyzes the cyclization of GTP to (8S)-3',8-cyclo-7,8-dihydroguanosine 5'-triphosphate. The chain is GTP 3',8-cyclase from Klebsiella pneumoniae subsp. pneumoniae (strain ATCC 700721 / MGH 78578).